A 359-amino-acid polypeptide reads, in one-letter code: 4-galactosyl-N-acetylglucosaminide 3-alpha-L-fucosyltransferase FUT6 (359 aa).

Over 1–14 (MDPLGPAKPQWSWR) the chain is Cytoplasmic. The helical; Signal-anchor for type II membrane protein transmembrane segment at 15-34 (CCLTTLLFQLLMAVCFFSYL) threads the bilayer. Residues 35-359 (RVSQDDPTVY…QTRGIAAWFT (325 aa)) are Lumenal-facing. N-linked (GlcNAc...) asparagine glycosylation is found at Asn-46, Asn-91, Asn-153, and Asn-184. The tract at residues 73–112 (KPIALPRCSEMVPGTADCNITADRKVYPQADAVIVHHREV) is determines site-specific fucosylation.

The protein belongs to the glycosyltransferase 10 family. Homodimer and monomer. Monomer (secreted form). N-glycosylated. In terms of processing, proteolytic cleavage releases a secreted glycoform of 43 kDa. As to expression, kidney, liver, colon, small intestine, bladder, uterus and salivary gland.

The protein localises to the golgi apparatus. It localises to the golgi stack membrane. Its subcellular location is the secreted. It carries out the reaction a beta-D-galactosyl-(1-&gt;4)-N-acetyl-beta-D-glucosaminyl derivative + GDP-beta-L-fucose = a beta-D-galactosyl-(1-&gt;4)-[alpha-L-fucosyl-(1-&gt;3)]-N-acetyl-beta-D-glucosaminyl derivative + GDP + H(+). It catalyses the reaction an N-acetyl-alpha-neuraminyl-(2-&gt;3)-beta-D-galactosyl-(1-&gt;4)-N-acetyl-beta-D-glucosaminyl derivative + GDP-beta-L-fucose = an alpha-Neu5Ac-(2-&gt;3)-beta-D-Gal-(1-&gt;4)-[alpha-L-Fuc-(1-&gt;3)]-beta-D-GlcNAc derivative + GDP + H(+). The enzyme catalyses an alpha-Neu5Ac-(2-&gt;3)-beta-D-Gal-(1-&gt;4)-beta-D-GlcNAc-(1-&gt;3)-beta-D-Gal-(1-&gt;4)-[alpha-L-Fuc-(1-&gt;3)]-beta-D-GlcNAc derivative + GDP-beta-L-fucose = an alpha-Neu5Ac-(2-&gt;3)-beta-D-Gal-(1-&gt;4)-[alpha-L-Fuc-(1-&gt;3)]-beta-D-GlcNAc-(1-&gt;3)-beta-D-Gal-(1-&gt;4)-[alpha-L-Fuc-(1-&gt;3)]-beta-D-GlcNAc derivative + GDP + H(+). The catalysed reaction is a neolactoside nLc6Cer + GDP-beta-L-fucose = beta-D-Gal-(1-&gt;4)-[alpha-L-Fuc-(1-&gt;3)]-beta-D-GlcNAc-(1-&gt;3)-beta-D-Gal-(1-&gt;4)-beta-D-GlcNAc-(1-&gt;3)-beta-D-Gal-(1-&gt;4)-beta-D-Glc-(1&lt;-&gt;1')-Cer + GDP + H(+). It carries out the reaction a neolactoside nLc6Cer + GDP-beta-L-fucose = beta-D-galactosyl-(1-&gt;4)-N-acetyl-beta-D-glucosaminyl-(1-&gt;3)-beta-D-galactosyl-(1-&gt;4)-[alpha-L-fucosyl-(1-&gt;3)]-N-acetyl-beta-D-glucosaminyl-(1-&gt;3)-beta-D-galactosyl-(1-&gt;4)-beta-D-glucosyl-(1&lt;-&gt;1')-ceramide + GDP + H(+). It catalyses the reaction a neolactoside VI(3)-alpha-NeuNAc-nLc6Cer + GDP-beta-L-fucose = a neolactoside VI(3)-alpha-NeuAc,V(3)-alphaFuc-nLc6Cer + GDP + H(+). The enzyme catalyses beta-D-galactosyl-(1-&gt;4)-N-acetyl-D-glucosamine + GDP-beta-L-fucose = beta-D-galactosyl-(1-&gt;4)-[alpha-L-fucosyl-(1-&gt;3)]-N-acetyl-D-glucosamine + GDP + H(+). The catalysed reaction is N-acetyl-alpha-neuraminosyl-(2-&gt;3)-beta-D-galactosyl-(1-&gt;4)-N-acetyl-beta-D-glucosamine + GDP-beta-L-fucose = N-acetyl-alpha-neuraminosyl-(2-&gt;3)-beta-D-galactosyl-(1-&gt;4)-[alpha-L-fucosyl-(1-&gt;3)]-N-acetyl-beta-D-glucosamine + GDP + H(+). It carries out the reaction lactose + GDP-beta-L-fucose = beta-D-galactosyl-(1-&gt;4)-[alpha-L-fucosyl-(1-&gt;3)]-D-glucose + GDP + H(+). It catalyses the reaction alpha-L-Fuc-(1-&gt;2)-beta-D-Gal-(1-&gt;4)-D-Glc + GDP-beta-L-fucose = alpha-L-Fuc-(1-&gt;2)-beta-D-Gal-(1-&gt;4)-[alpha-L-Fuc-(1-&gt;3)]-D-Glc + GDP + H(+). The enzyme catalyses a beta-D-galactosyl-(1-&gt;4)-N-acetyl-beta-D-6-sulfooxy-glucosaminyl derivative + GDP-beta-L-fucose = a beta-D-galactosyl-(1-&gt;4)-[alpha-L-fucosyl-(1-&gt;3)]-N-acetyl-beta-D-6-sulfooxy-glucosaminyl derivative + GDP + H(+). Its pathway is protein modification; protein glycosylation. Functionally, catalyzes the transfer of L-fucose, from a guanosine diphosphate-beta-L-fucose, to the N-acetyl glucosamine (GlcNAc) of a distal alpha2,3 sialylated lactosamine unit of a glycoprotein- or a glycolipid-linked sialopolylactosamines chain or of a distal or internal lactosamine unit of a neutral glycoprotein- or a glycolipid-linked polylactosamines chain through an alpha-1,3 glycosidic linkage and participates in surface expression of the sialyl Lewis X (sLe(x)), Lewis X (Le(x)) and non sialylated VIM2 determinants. Moreover transfers fucose to H-type 2 (Fucalpha1-2Galbeta1-4GlcNAc) chain acceptor substrates and participates in difucosylated sialyl Lewis x determinants. Also fucosylates a polylactosamine substrate having a 6 sulfate modification at the GlcNAc moiety and gives rise to sialyl and non-sialyl 6-sulfo lewis X. Does not have activity towards type 1 ((Galbeta1-3GlcNAc)) and H-type 1 chain (Fucalpha1-2Galbeta1-3GlcNAc) acceptors substrates. Does not have alpha(1,3)-fucosyltransferase activity. In Homo sapiens (Human), this protein is 4-galactosyl-N-acetylglucosaminide 3-alpha-L-fucosyltransferase FUT6.